The chain runs to 496 residues: MVEADHPGKLFIGGLNRETNEKMLKAVFGKHGPISEVLLIKDRTSKSRGFAFITFENPADAKNAAKDMNGKSLHGKAIKVEQAKKPSFQSGGRRRPPASSRNRSPSGSLRSARGSRGGTRGWLPSQEGHLDDGGYTPDLKMSYSRGLIPVKRGPSSRSGGPPPKKSAPSAVARSNSWMGSQGPMSQRRENYGVPPRRATISSWRNDRMSTRHDGYATNDGNHPSCQETRDYAPPSRGYAYRDNGHSNRDEHSSRGYRNHRSSRETRDYAPPSRGHAYRDYGHSRRDESYSRGYRNRRSSRETREYAPPSRGHGYRDYGHSRRHESYSRGYRNHPSSRETRDYAPPHRDYAYRDYGHSSWDEHSSRGYSYHDGYGEALGRDHSEHLSGSSYRDALQRYGTSHGAPPARGPRMSYGGSTCHAYSNTRDRYGRSWESYSSCGDFHYCDREHVCRKDQRNPPSLGRVLPDPREAYGSSSYVASIVDGGESRSEKGDSSRY.

The region spanning 8 to 85 (GKLFIGGLNR…KAIKVEQAKK (78 aa)) is the RRM domain. Disordered stretches follow at residues 67–349 (DMNG…HRDY) and 452–496 (KDQR…SSRY). 2 stretches are compositionally biased toward low complexity: residues 97–114 (PASSRNRSPSGSLRSARG) and 149–159 (PVKRGPSSRSG). The segment covering 175–184 (NSWMGSQGPM) has biased composition (polar residues). Basic and acidic residues-rich tracts occupy residues 204 to 214 (RNDRMSTRHDG), 242 to 253 (DNGHSNRDEHSS), 276 to 289 (AYRDYGHSRRDESY), 313 to 326 (GYRDYGHSRRHESY), 335 to 349 (SSRETRDYAPPHRDY), and 484 to 496 (GESRSEKGDSSRY).

As to quaternary structure, interacts with splicing factor proteins SFRS3/SRP20, TRA2B/SFRS10, KHDRBS1/SAM68 and KHDRBS3. In terms of tissue distribution, testis-specific.

It is found in the nucleus. In terms of biological role, RNA-binding protein which may be involved in spermatogenesis. Required for sperm development, possibly by participating in pre-mRNA splicing in the testis. This chain is RNA-binding motif protein, Y chromosome, family 1 member B (RBMY1B), found in Homo sapiens (Human).